Consider the following 448-residue polypeptide: UDP-glucose 6-dehydrogenase (448 aa).

NAD(+) contacts are provided by residues 2-19 (NITFIGSGYVGLVSGIIM), Val-11, Asp-30, Lys-35, Thr-121, and Glu-152. Residues 148–152 (EFLRE), Lys-204, Asn-208, 249–253 (FLNAG), and Gly-257 each bind substrate. Catalysis depends on Cys-260, which acts as the Nucleophile. Lys-263 serves as a coordination point for NAD(+). Lys-321 is a binding site for substrate. Residue Arg-328 participates in NAD(+) binding.

The protein belongs to the UDP-glucose/GDP-mannose dehydrogenase family.

It catalyses the reaction UDP-alpha-D-glucose + 2 NAD(+) + H2O = UDP-alpha-D-glucuronate + 2 NADH + 3 H(+). It functions in the pathway nucleotide-sugar biosynthesis; UDP-alpha-D-glucuronate biosynthesis; UDP-alpha-D-glucuronate from UDP-alpha-D-glucose: step 1/1. The chain is UDP-glucose 6-dehydrogenase (udg) from Rickettsia felis (strain ATCC VR-1525 / URRWXCal2) (Rickettsia azadi).